Reading from the N-terminus, the 130-residue chain is Small ribosomal subunit protein uS8 (130 aa).

This sequence belongs to the universal ribosomal protein uS8 family. As to quaternary structure, part of the 30S ribosomal subunit. Contacts proteins S5 and S12.

Its function is as follows. One of the primary rRNA binding proteins, it binds directly to 16S rRNA central domain where it helps coordinate assembly of the platform of the 30S subunit. This is Small ribosomal subunit protein uS8 from Aliivibrio fischeri (strain MJ11) (Vibrio fischeri).